The sequence spans 596 residues: F-box/WD repeat-containing protein 8 (596 aa).

At Met1 the chain carries N-acetylmethionine. The disordered stretch occupies residues 21-95 (QVLRRRRRLE…PDRDAAEPEP (75 aa)). The span at 29-43 (LEAGERRPRRPEAGA) shows a compositional bias: basic and acidic residues. Residues 44–64 (RGEPASGYLGLAQGLLEGAGR) show a composition bias toward low complexity. The segment covering 71-91 (GRTDRKDVSSRSRSPPDRDAA) has biased composition (basic and acidic residues). Phosphoserine occurs at positions 82 and 84. Residues 111–157 (PFFDVHLPYELAINIFQYLNRRELGLCAQVSKTWKVIAEDEVLWYRL) enclose the F-box domain. WD repeat units lie at residues 199 to 248 (AVSE…LESE), 257 to 297 (QPYV…FEHD), 298 to 338 (ARIQ…SEFE), 339 to 381 (VQKL…LHYV), 382 to 427 (YGQP…SKLG), 428 to 473 (NALG…SAHQ), 474 to 511 (LGVS…EVHS), and 512 to 559 (RHPV…AYEF).

As to quaternary structure, component of the Cul7-RING(FBXW8) complex consisting of CUL7, RBX1, SKP1 and FBXW8; within the complex interacts with CUL7 and SKP1. Interacts with GLMN isoform 1. Interacts with OBSL1, CUL1, CUL2, CCT6B, PFDN5, CCT2, CCT3, CCT6A, CCT7, VBP1, CCDC8, ARF1, TRIP13, PDCD5 and GORASP1. Interacts with MAP4K1/HPK1 (when autophosphorylated). Associated component of the 3M complex. Interacts with POUF51 (when phosphorylated on 'Ser-347'). Phosphorylation at Ser-84 by mTORC2 promotes FBXW8 stabilization, allowing its translocation to the cytosol in response to insulin. Expressed in placenta and embryonic brain (at protein level).

It is found in the cytoplasm. Its subcellular location is the perinuclear region. It localises to the golgi apparatus. The protein resides in the cytosol. It participates in protein modification; protein ubiquitination. Its function is as follows. Substrate-recognition component of the Cul7-RING(FBXW8) ubiquitin ligase complex, which mediates the ubiquitination and subsequent proteasomal degradation of target proteins. The Cul7-RING(FBXW8) complex mediates ubiquitination and consequent degradation of GORASP1, acting as a component of the ubiquitin ligase pathway that regulates Golgi morphogenesis and dendrite patterning in brain. Mediates ubiquitination and degradation of IRS1 in a mTOR-dependent manner: the Cul7-RING(FBXW8) complex recognizes and binds IRS1 previously phosphorylated by S6 kinase (RPS6KB1 or RPS6KB2). The Cul7-RING(FBXW8) complex also mediates ubiquitination of MAP4K1/HPK1: recognizes and binds autophosphorylated MAP4K1/HPK1, leading to its degradation, thereby affecting cell proliferation and differentiation. The Cul7-RING(FBXW8) complex also mediates ubiquitination of phosphorylated cyclin-D1 (CCND1). The Cul7-RING(FBXW8) complex is however not a major regulator of CCND1 stability during the G1/S transition. Associated component of the 3M complex, suggesting that it mediates some of 3M complex functions. This is F-box/WD repeat-containing protein 8 (Fbxw8) from Rattus norvegicus (Rat).